We begin with the raw amino-acid sequence, 101 residues long: Aspartyl/glutamyl-tRNA(Asn/Gln) amidotransferase subunit C (101 aa).

This sequence belongs to the GatC family. In terms of assembly, heterotrimer of A, B and C subunits.

The catalysed reaction is L-glutamyl-tRNA(Gln) + L-glutamine + ATP + H2O = L-glutaminyl-tRNA(Gln) + L-glutamate + ADP + phosphate + H(+). It catalyses the reaction L-aspartyl-tRNA(Asn) + L-glutamine + ATP + H2O = L-asparaginyl-tRNA(Asn) + L-glutamate + ADP + phosphate + 2 H(+). Its function is as follows. Allows the formation of correctly charged Asn-tRNA(Asn) or Gln-tRNA(Gln) through the transamidation of misacylated Asp-tRNA(Asn) or Glu-tRNA(Gln) in organisms which lack either or both of asparaginyl-tRNA or glutaminyl-tRNA synthetases. The reaction takes place in the presence of glutamine and ATP through an activated phospho-Asp-tRNA(Asn) or phospho-Glu-tRNA(Gln). The protein is Aspartyl/glutamyl-tRNA(Asn/Gln) amidotransferase subunit C of Lactococcus lactis subsp. cremoris (strain SK11).